The chain runs to 328 residues: RNA-binding protein KhpB (328 aa).

The segment at 3–53 (VFTGSTVEEAIQKGLKELDIPRMKAHIKVISREKKGFLGLFGKKPAQVDIE) is jag_N domain. Residues 54-180 (AISETTVVKA…GLKVETNFDI (127 aa)) are linker. Phosphothreonine is present on T89. The KH domain occupies 181–258 (EQVATEVMAY…SRTFYVTINV (78 aa)). The 66-residue stretch at 263 to 328 (EHRAEVLQTY…PNRYVVVDTE (66 aa)) folds into the R3H domain.

This sequence belongs to the KhpB RNA-binding protein family. As to quaternary structure, interacts with KhpA; the 2 proteins colocalize throughout the cell cycle, with some increase at midcell in dividing cells. Interacts with StkP which phosphorylates it, interacts with MltG, MreC, RodZ and YidC2. Phosphorylated on Thr-89 by StkP; there is another poorly phosphorylated residue in the protein. Dephosphorylated by PhpP.

It localises to the cytoplasm. In terms of biological role, a probable RNA chaperone. Forms a complex with KhpA which binds to cellular RNA and controls its expression. Plays a role in peptidoglycan (PG) homeostasis and cell length regulation. Its function is as follows. Forms a complex with KhpA which presumably binds to about 170 cellular RNAs (mRNA, tRNA intergenic RNA and sRNAs); the proteins alone each bind the same set of RNAs. Suppresses the requirement for PBP2b (penA, a transpeptidase) in peripheral peptidoglycan (PG) synthesis. May function as a pleiotropic RNA chaperone controlling pneumococcal cell division, including PG homeostasis and regulating peripheral PG synthesis by the elongasome. This is RNA-binding protein KhpB from Streptococcus pneumoniae serotype 2 (strain D39 / NCTC 7466).